The sequence spans 195 residues: NADH dehydrogenase [ubiquinone] iron-sulfur protein 3 (195 aa).

This sequence belongs to the complex I 30 kDa subunit family. Complex I is composed of about 45 different subunits. This is a component of the iron-sulfur (IP) fragment of the enzyme.

Its subcellular location is the mitochondrion inner membrane. The enzyme catalyses a ubiquinone + NADH + 5 H(+)(in) = a ubiquinol + NAD(+) + 4 H(+)(out). In terms of biological role, core subunit of the mitochondrial membrane respiratory chain NADH dehydrogenase (Complex I) that is believed to belong to the minimal assembly required for catalysis. Complex I functions in the transfer of electrons from NADH to the respiratory chain. The immediate electron acceptor for the enzyme is believed to be ubiquinone. The sequence is that of NADH dehydrogenase [ubiquinone] iron-sulfur protein 3 (NAD9) from Marchantia polymorpha (Common liverwort).